Consider the following 432-residue polypeptide: Adenylosuccinate synthetase 1 (432 aa).

GTP is bound by residues 12-18 (GDEGKGR) and 40-42 (GHT). The Proton acceptor role is filled by Asp-13. Mg(2+)-binding residues include Asp-13 and Gly-40. Residues 13–16 (DEGK), 38–41 (NAGH), Thr-128, Arg-142, Gln-222, Thr-237, and Arg-301 contribute to the IMP site. His-41 functions as the Proton donor in the catalytic mechanism. A substrate-binding site is contributed by 297 to 303 (TNTGRPR). Residues Arg-303, 329-331 (KLD), and 411-413 (STG) each bind GTP.

The protein belongs to the adenylosuccinate synthetase family. In terms of assembly, homodimer. Mg(2+) is required as a cofactor.

It localises to the cytoplasm. The catalysed reaction is IMP + L-aspartate + GTP = N(6)-(1,2-dicarboxyethyl)-AMP + GDP + phosphate + 2 H(+). Its pathway is purine metabolism; AMP biosynthesis via de novo pathway; AMP from IMP: step 1/2. Functionally, plays an important role in the de novo pathway of purine nucleotide biosynthesis. Catalyzes the first committed step in the biosynthesis of AMP from IMP. The protein is Adenylosuccinate synthetase 1 of Chromobacterium violaceum (strain ATCC 12472 / DSM 30191 / JCM 1249 / CCUG 213 / NBRC 12614 / NCIMB 9131 / NCTC 9757 / MK).